Reading from the N-terminus, the 180-residue chain is Acireductone dioxygenase (180 aa).

The Fe(2+) site is built by H97, H99, E103, and H141. Ni(2+) contacts are provided by H97, H99, E103, and H141.

The protein belongs to the acireductone dioxygenase (ARD) family. In terms of assembly, monomer. It depends on Fe(2+) as a cofactor. Ni(2+) serves as cofactor.

The enzyme catalyses 1,2-dihydroxy-5-(methylsulfanyl)pent-1-en-3-one + O2 = 3-(methylsulfanyl)propanoate + CO + formate + 2 H(+). It catalyses the reaction 1,2-dihydroxy-5-(methylsulfanyl)pent-1-en-3-one + O2 = 4-methylsulfanyl-2-oxobutanoate + formate + 2 H(+). The protein operates within amino-acid biosynthesis; L-methionine biosynthesis via salvage pathway; L-methionine from S-methyl-5-thio-alpha-D-ribose 1-phosphate: step 5/6. In terms of biological role, catalyzes 2 different reactions between oxygen and the acireductone 1,2-dihydroxy-3-keto-5-methylthiopentene (DHK-MTPene) depending upon the metal bound in the active site. Fe-containing acireductone dioxygenase (Fe-ARD) produces formate and 2-keto-4-methylthiobutyrate (KMTB), the alpha-ketoacid precursor of methionine in the methionine recycle pathway. Ni-containing acireductone dioxygenase (Ni-ARD) produces methylthiopropionate, carbon monoxide and formate, and does not lie on the methionine recycle pathway. The polypeptide is Acireductone dioxygenase (Klebsiella pneumoniae subsp. pneumoniae (strain ATCC 700721 / MGH 78578)).